The chain runs to 550 residues: Transcription factor 7-like 1-C (550 aa).

The segment covering methionine 1–glutamate 11 has biased composition (gly residues). Positions methionine 1 to serine 60 are interaction with CTNNB1-A. Disordered regions lie at residues methionine 1–arginine 76, glycine 182–glutamate 206, and tryptophan 390–threonine 473. Basic and acidic residues-rich tracts occupy residues glutamate 17–proline 32 and serine 51–arginine 76. The interval leucine 108–valine 311 is interaction with AES and TLE4-A. The segment at residues isoleucine 323 to serine 391 is a DNA-binding region (HMG box). Positions lysine 406–threonine 415 are enriched in basic and acidic residues. Residues glutamine 407–aspartate 550 form an interaction with CTBP-B region. Low complexity predominate over residues serine 444 to serine 463. Residues glutamate 464–threonine 473 are compositionally biased toward polar residues.

This sequence belongs to the TCF/LEF family. As to quaternary structure, interacts with csnk1e, ctnnb1-A, ctbp-B, dact1-A and gsk3b. May interact with ase and tle4-A. Phosphorylated. Phosphorylation by csnk1e promotes binding to ctnnb1-A while phosphorylation by gsk3b may reverse this effect.

The protein localises to the nucleus. Participates in the Wnt signaling pathway. Binds to DNA and acts as a repressor in the absence of ctnnb1-A and possibly ctnnb1-B, and as an activator in the presence of these proteins. Required early in development for the establishment of the dorsal body axis in response to maternal Wnt signaling. This chain is Transcription factor 7-like 1-C (tcf7l1-c), found in Xenopus laevis (African clawed frog).